Consider the following 189-residue polypeptide: Cold-regulated 413 plasma membrane protein 3 (189 aa).

Topologically, residues 1-24 (MENIEYLNEIQAVAGKLIHSYGVP) are extracellular. Residues 25-45 (VMITLFLRWLASIVAVFLMIL) form a helical membrane-spanning segment. Topologically, residues 46–55 (DQTKWKYSNN) are cytoplasmic. A helical membrane pass occupies residues 56 to 76 (IMASLLAPYLFSSLPIVIFQV). Residues 77-79 (LRN) lie on the Extracellular side of the membrane. Residues 80-100 (GVGKWIALLTVILRLFLPNHF) traverse the membrane as a helical segment. At 101-104 (HESL) the chain is on the cytoplasmic side. Residues 105-125 (EIPGATILLIVVTPSDIGAIF) traverse the membrane as a helical segment. Residues 126–168 (RDDLRYTGGDVCLLTSFYLINKHTKACGGIKNSFTQKDKVTYS) lie on the Extracellular side of the membrane. The chain crosses the membrane as a helical span at residues 169-189 (ICLWILFVYPILSSFAALFYL).

It belongs to the Cold-regulated 413 protein family.

The protein localises to the cell membrane. This chain is Cold-regulated 413 plasma membrane protein 3, found in Arabidopsis thaliana (Mouse-ear cress).